Here is a 393-residue protein sequence, read N- to C-terminus: MMNKASGRSFTRSSKYLLATLIAGMMASGVSAAELVSDKALESAPTVGWASQNGFTTGGAAATSDNIYIVTNISEFTSALSAGAEAKIIQIKGTIDISGGTPYTDFADQKARSQINIPANTTVIGLGTDAKFINGSLIIDGTDGTNNVIIRNVYIQTPIDVEPHYEKGDGWNAEWDAMNITNGAHHVWIDHVTISDGNFTDDMYTTKDGETYVQHDGALDIKRGSDYVTISNSLIDQHDKTMLIGHNDTNSAQDKGKLHVTLFNNVFNRVTERAPRVRYGSIHSFNNVFKGDAKDPVYRYQYSFGIGTSGSVLSEGNSFTIANLSASKACKVVKKFNGSIFSDNGSVLNGSAVDLSGCGFSAYTSKIPYIYDVQPMTTELAQSITDNAGSGKL.

A signal peptide spans 1–32; sequence MMNKASGRSFTRSSKYLLATLIAGMMASGVSA. Residues Glu174, Asp176, Asp216, and Asp220 each coordinate Ca(2+). Arg273 is an active-site residue. Cys330 and Cys358 are disulfide-bonded.

Belongs to the polysaccharide lyase 1 family. PLADES subfamily. It depends on Ca(2+) as a cofactor.

The protein resides in the secreted. It carries out the reaction Eliminative cleavage of (1-&gt;4)-alpha-D-galacturonan to give oligosaccharides with 4-deoxy-alpha-D-galact-4-enuronosyl groups at their non-reducing ends.. It participates in glycan metabolism; pectin degradation; 2-dehydro-3-deoxy-D-gluconate from pectin: step 2/5. Its function is as follows. Involved in maceration and soft-rotting of plant tissue. In Dickeya chrysanthemi (Pectobacterium chrysanthemi), this protein is Pectate lyase A (pelA).